A 710-amino-acid chain; its full sequence is MAATLPLCAALRSPVSSRRFAPIHKTDVPFQFNVVLSPFFGSVAIGGRIFPRLPAAKQETDQDEVGFDQQPSQELAIASACLVGVLTGVSVVLFNNCVHLLRDFSWDGIPDRGASWLREAPIGSNWLRVILVPTIGGLVVSILNQLRESAGKSTGDSHSSLDRVKAVLRPFLKTVAACVTLGTGNSLGPEGPSVEIGASIAKGVNSLFNKSPQTGFSLLAAGSAAGISSGFNAAVAGCFFAVESVLWPSSSTDSSTSLPNTTSMVILSAVTASVVSEIGLGSEPAFKVPDYDFRSPGELPLYLLLGALCGLVSLALSRCTSSMTSAVDSLNKDAGIPKAVFPVMGGLSVGIIALVYPEVLYWGFQNVDILLEKRPFVKGLSADLLLQLVAVKIAATAWCRASGLVGGYYAPSLFIGGAAGMAYGKFIGLALAQNPDFNLSILEVASPQAYGLVGMAATLAGVCQVPLTAVLLLFELTQDYRIVLPLLGAVGMSSWITSGQSKRQETRETKETRKRKSQEAVQSLTSSDDESSTNNLCEVESSLCLDDSLNQSEELPKSIFVSEAMRTRFATVMMSTSLEEALTRMLIEKQSCALIVDPDNIFLGILTLSDIQEFSKARKEGNNRPKDIFVNDICSRSGGKCKVPWTVTPDMDLLAAQTIMNKHELSHVAVVSGSIDAPRIHPVGVLDRECITLTRRALATRMYLLNSLYL.

Helical transmembrane passes span Glu74–Phe94, Ile122–Ile142, Val164–Gly184, Ser193–Gln213, Gly222–Val242, Thr261–Gly281, Pro296–Leu316, Val340–Leu360, Gly379–Cys399, Ser412–Ala432, Gly451–Leu471, and Leu472–Met492. Positions Gln500 to Asn534 are disordered. Positions Lys502–Glu511 are enriched in basic and acidic residues. Residues Ala520–Asn534 show a composition bias toward polar residues. CBS domains follow at residues Met565–Arg624 and Lys640–Met702. The helical transmembrane segment at His667–Asp687 threads the bilayer.

The protein belongs to the chloride channel (TC 2.A.49) family. As to quaternary structure, homodimer.

It localises to the membrane. The enzyme catalyses 2 chloride(in) + H(+)(out) = 2 chloride(out) + H(+)(in). In terms of biological role, voltage-gated thylakoid chloride (Cl) channel/transporter involved in chloride homeostasis after transition from light to dark. Influences chloroplast ultrastructure and subsequent photosynthetic electron transport. During photosynthetic response on transition from dark to low light, involved in a sequential mechanism of adaptation; VCCN1 and CLCe first trigger the activation of photoprotection, which is later down-regulated by KEA3 to a low steady state, while adjusting electron transport. Regulates photosynthesis by a pH-independent mechanism likely involving Cl(-) homeostasis. This chain is Chloride channel protein CLC-e, found in Arabidopsis thaliana (Mouse-ear cress).